Consider the following 341-residue polypeptide: L-threonine 3-dehydrogenase (341 aa).

Cysteine 38 is a binding site for Zn(2+). Active-site charge relay system residues include threonine 40 and histidine 43. Zn(2+)-binding residues include histidine 63, glutamate 64, cysteine 93, cysteine 96, cysteine 99, and cysteine 107. Residues isoleucine 175, aspartate 195, arginine 200, 262–264 (LGI), and 286–287 (IY) each bind NAD(+).

Belongs to the zinc-containing alcohol dehydrogenase family. As to quaternary structure, homotetramer. Zn(2+) serves as cofactor.

It localises to the cytoplasm. The catalysed reaction is L-threonine + NAD(+) = (2S)-2-amino-3-oxobutanoate + NADH + H(+). It participates in amino-acid degradation; L-threonine degradation via oxydo-reductase pathway; glycine from L-threonine: step 1/2. Catalyzes the NAD(+)-dependent oxidation of L-threonine to 2-amino-3-ketobutyrate. The protein is L-threonine 3-dehydrogenase of Enterobacter sp. (strain 638).